Consider the following 886-residue polypeptide: MHDAFEPVPILEKLPLQIDCLAAWEEWLLVGTKQGHLLLYRIRKDVVPADVASPESGSCNRFEVTLEKSNKNFSKKIQQIHVVSQFKILVSLLENNIYVHDLLTFQQITTVSKAKGASLFTCDLQHTETGEEVLRMCVAVRKKLQLYFWKDREFHELQGDFSVPDVPKSMAWCENSICVGFKRDYYLIRVDGKGSIKELFPTGKQLEPLVAPLADGKVAVGQDDLTVVLNEEGICTQKCALNWTDIPVAMEHQPPYIVAVLPRYVEIRTLEPRLLVQSIELQRPRFITSGGSNIIYVASNHFVWRLIPVPMATQIQQLLQDKQFELALQLAEMKDDSDSEKQQQIHHIKNLYAFNLFCQKRFDESMQVFAKLGTDPTHVMGLYPDLLPTDYRKQLQYPNPLPTLSGAELEKAHLALIDYLTQKRSQLVKKLNDSDHQSSTSPLMEGTPTIKSKKKLLQIIDTTLLKCYLHTNVALVAPLLRLENNHCHIEESEHVLKKAHKYSELIILYEKKGLHEKALQVLVDQSKKANSPLKGHERTVQYLQHLGTENLHLIFSYSVWVLRDFPEDGLKIFTEDLPEVESLPRDRVLNFLIENFKALAIPYLEHIIHVWEETGSQFHNCLIQLYCEKVQSLMKDYLLSLPTGKSPVPAGEEGGELGEYRQKLLMFLEISSHYDPGRLICDFPFDGLLEERALLLGRMGKHEQALFIYVHVLKDTKMAKEYCHKHYDQNKEGNKDVYLSLLRMYLSPPSIHCLGPIKLELLEPQANLQAALQVLELHYSKLDTTKAINLLPANTQINDIRIFLEKVLEENAQKKRFNQVLKNLLHAEFLRVQEERILHQQVKCIITEEKVCMVCKKKIGNSAFARYPNGVVVHYFCSKEVNSADT.

Positions 15–294 constitute a CNH domain; the sequence is PLQIDCLAAW…RFITSGGSNI (280 aa). A CHCR repeat occupies 573 to 750; sequence FTEDLPEVES…LLRMYLSPPS (178 aa).

The protein belongs to the VAM6/VPS39 family. In terms of assembly, homooligomer. Interacts with TGFBR2 and, less efficiently, with TGFBR1; interaction with TGFBR2 is independent of the receptor kinase activity and of the presence of TGF-beta. Also interacts with ACVR2B, but not with BMPR2. Interacts with SMAD4, preferentially following TGF-beta treatment. Component of the putative homotypic fusion and vacuole protein sorting (HOPS) complex; the core of which composed of the class C Vps proteins VPS11, VPS16, VPS18 and VPS33A, is associated with VPS39 and VPS41. Interacts with PLEKHM2; involved in VPS39 recruitment to ARL8B-containing lysosomes. Associates with adapter protein complex 3 (AP-3) and clathrin:AP-3 complexes. Interacts with STX17; this interaction is increased in the absence of TMEM39A. Interacts with RAB7, RAB2A and RAB2B. Interacts with RAB2A (GTP-bound); the interaction contributes to obtaining a functional HOPS complex that promotes autophagosome-lysosome membrane fusion driven by STX17-SNAP29-VAMP8. Interacts with RAB39A (GTP-bound) and RAB39B (GTP-bound); interaction with RAB39A contributes to obtaining a functional HOPS complex.

The protein resides in the cytoplasm. It is found in the lysosome membrane. It localises to the late endosome membrane. Functionally, regulator of TGF-beta/activin signaling, inhibiting SMAD3- and activating SMAD2-dependent transcription. Acts by interfering with SMAD3/SMAD4 complex formation, this would lead to inhibition of SMAD3-dependent transcription and relieve SMAD3 inhibition of SMAD2-dependent promoters, thus increasing SMAD2-dependent transcription. Plays a role in vesicle-mediated protein trafficking to lysosomal compartments including the endocytic membrane transport and autophagic pathways. Acts as a component of the HOPS endosomal tethering complex which is proposed to be involved in the Rab5-to-Rab7 endosome conversion probably implicating MON1A/B, and via binding SNAREs and SNARE complexes to mediate tethering and docking events during SNARE-mediated membrane fusion. The HOPS complex is proposed to be recruited to Rab7 on the late endosomal membrane and to regulate late endocytic, phagocytic and autophagic traffic towards lysosomes. Involved in homotypic vesicle fusions between late endosomes and in heterotypic fusions between late endosomes and lysosomes. Required for fusion of endosomes and autophagosomes with lysosomes. The protein is Vam6/Vps39-like protein of Mus musculus (Mouse).